The sequence spans 436 residues: Serine--tRNA ligase (436 aa).

Threonine 239–glutamate 241 is a binding site for L-serine. Arginine 270–glutamate 272 lines the ATP pocket. Glutamate 293 contributes to the L-serine binding site. Glutamate 357–serine 360 contributes to the ATP binding site. Serine 393 lines the L-serine pocket.

Belongs to the class-II aminoacyl-tRNA synthetase family. Type-1 seryl-tRNA synthetase subfamily. As to quaternary structure, homodimer. The tRNA molecule binds across the dimer.

It localises to the cytoplasm. It carries out the reaction tRNA(Ser) + L-serine + ATP = L-seryl-tRNA(Ser) + AMP + diphosphate + H(+). It catalyses the reaction tRNA(Sec) + L-serine + ATP = L-seryl-tRNA(Sec) + AMP + diphosphate + H(+). It functions in the pathway aminoacyl-tRNA biosynthesis; selenocysteinyl-tRNA(Sec) biosynthesis; L-seryl-tRNA(Sec) from L-serine and tRNA(Sec): step 1/1. Catalyzes the attachment of serine to tRNA(Ser). Is also able to aminoacylate tRNA(Sec) with serine, to form the misacylated tRNA L-seryl-tRNA(Sec), which will be further converted into selenocysteinyl-tRNA(Sec). The polypeptide is Serine--tRNA ligase (Blochmanniella floridana).